The sequence spans 315 residues: Methionyl-tRNA formyltransferase (315 aa).

113–116 serves as a coordination point for (6S)-5,6,7,8-tetrahydrofolate; it reads SLLP.

It belongs to the Fmt family.

The enzyme catalyses L-methionyl-tRNA(fMet) + (6R)-10-formyltetrahydrofolate = N-formyl-L-methionyl-tRNA(fMet) + (6S)-5,6,7,8-tetrahydrofolate + H(+). Its function is as follows. Attaches a formyl group to the free amino group of methionyl-tRNA(fMet). The formyl group appears to play a dual role in the initiator identity of N-formylmethionyl-tRNA by promoting its recognition by IF2 and preventing the misappropriation of this tRNA by the elongation apparatus. The polypeptide is Methionyl-tRNA formyltransferase (Escherichia fergusonii (strain ATCC 35469 / DSM 13698 / CCUG 18766 / IAM 14443 / JCM 21226 / LMG 7866 / NBRC 102419 / NCTC 12128 / CDC 0568-73)).